An 82-amino-acid chain; its full sequence is Translational regulator CsrA (82 aa).

Belongs to the CsrA/RsmA family. Homodimer; the beta-strands of each monomer intercalate to form a hydrophobic core while the alpha-helices form wings that extend away from the core. Each of the alpha-helical wings interacts with an FliW monomer, yielding a FliW-CsrA(2)-FliW complex.

The protein localises to the cytoplasm. Functionally, a translational regulator that binds mRNA to regulate translation initiation and/or mRNA stability. Usually binds in the 5'-UTR at or near the Shine-Dalgarno sequence preventing ribosome-binding, thus repressing translation. Its main target seems to be the major flagellin gene, while its function is anatagonized by FliW. The polypeptide is Translational regulator CsrA (Geobacillus thermodenitrificans (strain NG80-2)).